The sequence spans 82 residues: Small ribosomal subunit protein uS17 (82 aa).

Belongs to the universal ribosomal protein uS17 family. As to quaternary structure, part of the 30S ribosomal subunit.

Functionally, one of the primary rRNA binding proteins, it binds specifically to the 5'-end of 16S ribosomal RNA. This Rhodopseudomonas palustris (strain BisA53) protein is Small ribosomal subunit protein uS17.